Here is a 130-residue protein sequence, read N- to C-terminus: Sec-independent protein translocase protein TatB (130 aa).

A helical transmembrane segment spans residues 2 to 22 (FANIGWGEMLVLVVVGLVVLG). A disordered region spans residues 108–130 (DAVASAQEAPDEPVRPPFDSDAT).

This sequence belongs to the TatB family. The Tat system comprises two distinct complexes: a TatABC complex, containing multiple copies of TatA, TatB and TatC subunits, and a separate TatA complex, containing only TatA subunits. Substrates initially bind to the TatABC complex, which probably triggers association of the separate TatA complex to form the active translocon.

The protein resides in the cell membrane. Functionally, part of the twin-arginine translocation (Tat) system that transports large folded proteins containing a characteristic twin-arginine motif in their signal peptide across membranes. Together with TatC, TatB is part of a receptor directly interacting with Tat signal peptides. TatB may form an oligomeric binding site that transiently accommodates folded Tat precursor proteins before their translocation. The protein is Sec-independent protein translocase protein TatB of Mycobacterium ulcerans (strain Agy99).